The following is a 429-amino-acid chain: Probable proton-coupled zinc antiporter SLC30A4 (429 aa).

The Cytoplasmic segment spans residues 1 to 113; it reads MAGSGAWKRL…LLKQRKVKTR (113 aa). Residues 114 to 134 traverse the membrane as a helical segment; that stretch reads LTIAAVLYLLFMIGELVGGYI. The Lumenal portion of the chain corresponds to 135-143; it reads ANSLAIMTD. The chain crosses the membrane as a helical span at residues 144–164; it reads ALHMLTDLSAIILTLLALWLS. Zn(2+) is bound by residues histidine 146 and aspartate 150. Over 165-178 the chain is Cytoplasmic; it reads SKSPTKRFTFGFHR. Residues 179–199 traverse the membrane as a helical segment; it reads LEVLSAMISVLLVYILMGFLL. The Lumenal portion of the chain corresponds to 200-216; that stretch reads YEAVQRTIHMKYEINGD. The chain crosses the membrane as a helical span at residues 217-237; sequence IMLITAAIGVAVNVIMGFLLN. At 238-274 the chain is on the cytoplasmic side; sequence QSGHHHAHSHSLPSNSPTTGPRCGHNQGQDSLAVRAA. Residues 240-264 form a zinc binding region; that stretch reads GHHHAHSHSLPSNSPTTGPRCGHNQ. A helical transmembrane segment spans residues 275-295; the sequence is FVHALGDLVQSVGVLIAAYII. Zn(2+)-binding residues include histidine 277 and aspartate 281. Residues 296-310 are Lumenal-facing; sequence RFKPEYRIADPICTY. Residues 311 to 331 traverse the membrane as a helical segment; sequence VFSLLVAFTTFRIIWDTVVII. Topologically, residues 332-429 are cytoplasmic; the sequence is LEGVPSHLNV…TCANCQSSSS (98 aa).

This sequence belongs to the cation diffusion facilitator (CDF) transporter (TC 2.A.4) family. SLC30A subfamily. In terms of assembly, homodimerization could regulate efficiency for zinc transport. Interacts with TMEM163.

The protein resides in the endosome membrane. Its subcellular location is the late endosome membrane. It localises to the lysosome membrane. The catalysed reaction is Zn(2+)(in) + 2 H(+)(out) = Zn(2+)(out) + 2 H(+)(in). Its function is as follows. Probable proton-coupled zinc ion antiporter mediating zinc import from cytoplasm potentially into the endocytic compartment. Controls zinc deposition in milk. The sequence is that of Probable proton-coupled zinc antiporter SLC30A4 from Bos taurus (Bovine).